Consider the following 339-residue polypeptide: Transcription initiation factor IIB (339 aa).

The TFIIB-type zinc-finger motif lies at 39–70 (EELICPMCGSKNIIKDYERAEIVCETCGCVLQ). Residues C43, C46, C62, and C65 each coordinate Zn(2+). A run of 2 repeats spans residues 156-239 (SELD…SREL) and 250-331 (DYVP…ELTE).

This sequence belongs to the TFIIB family.

Functionally, stabilizes TBP binding to an archaeal box-A promoter. Also responsible for recruiting RNA polymerase II to the pre-initiation complex (DNA-TBP-TFIIB). The chain is Transcription initiation factor IIB from Methanothermococcus thermolithotrophicus (Methanococcus thermolithotrophicus).